The chain runs to 185 residues: dCTP deaminase (185 aa).

Residues 108 to 113 (KSTYAR), 132 to 134 (TLE), Gln153, Tyr167, and Gln177 contribute to the dCTP site. Glu134 acts as the Proton donor/acceptor in catalysis.

Belongs to the dCTP deaminase family. As to quaternary structure, homotrimer.

It catalyses the reaction dCTP + H2O + H(+) = dUTP + NH4(+). Its pathway is pyrimidine metabolism; dUMP biosynthesis; dUMP from dCTP (dUTP route): step 1/2. Functionally, catalyzes the deamination of dCTP to dUTP. This chain is dCTP deaminase, found in Pelagibacter ubique (strain HTCC1062).